We begin with the raw amino-acid sequence, 107 residues long: METIAFRMVLNPGMREEYERRHAQIWPELVDALHNAGVRDYRIFFDPDSNHLFAILTRNSHHTMDELPQLDVMRKWWDYMADIMHTGPDHTPVQQPLEPVFHLNSLS.

Tyr-18 is a substrate binding site. Catalysis depends on His-22, which acts as the Proton donor. Substrate-binding positions include Tyr-41 and 76–77 (WW).

This sequence belongs to the rhamnose mutarotase family. In terms of assembly, homodimer.

The protein resides in the cytoplasm. The catalysed reaction is alpha-L-rhamnose = beta-L-rhamnose. The protein operates within carbohydrate metabolism; L-rhamnose metabolism. Involved in the anomeric conversion of L-rhamnose. The chain is L-rhamnose mutarotase from Paraburkholderia phytofirmans (strain DSM 17436 / LMG 22146 / PsJN) (Burkholderia phytofirmans).